Here is a 444-residue protein sequence, read N- to C-terminus: L-cysteine:1D-myo-inositol 2-amino-2-deoxy-alpha-D-glucopyranoside ligase (444 aa).

Positions 1-13 are enriched in basic and acidic residues; that stretch reads MPCDRKTSPDQHH. A disordered region spans residues 1–21; it reads MPCDRKTSPDQHHALQIHRHH. Residue Cys75 participates in Zn(2+) binding. L-cysteinyl-5'-AMP is bound by residues 75–78, Thr90, and 113–115; these read CGIT and NIT. The short motif at 77–87 is the 'HIGH' region element; it reads ITPYDATHLGH. Residues 219-224 carry the 'ERGGDP' region motif; sequence ERGGDP. An L-cysteinyl-5'-AMP-binding site is contributed by Trp259. Position 263 (Cys263) interacts with Zn(2+). 281–283 lines the L-cysteinyl-5'-AMP pocket; sequence GSD. Zn(2+) is bound at residue His288. Position 315 (Ile315) interacts with L-cysteinyl-5'-AMP. A 'KMSKS' region motif is present at residues 321-325; it reads KMSKS.

The protein belongs to the class-I aminoacyl-tRNA synthetase family. MshC subfamily. Monomer. Zn(2+) is required as a cofactor.

It catalyses the reaction 1D-myo-inositol 2-amino-2-deoxy-alpha-D-glucopyranoside + L-cysteine + ATP = 1D-myo-inositol 2-(L-cysteinylamino)-2-deoxy-alpha-D-glucopyranoside + AMP + diphosphate + H(+). Functionally, catalyzes the ATP-dependent condensation of GlcN-Ins and L-cysteine to form L-Cys-GlcN-Ins. The chain is L-cysteine:1D-myo-inositol 2-amino-2-deoxy-alpha-D-glucopyranoside ligase from Mycolicibacterium gilvum (strain PYR-GCK) (Mycobacterium gilvum (strain PYR-GCK)).